Reading from the N-terminus, the 205-residue chain is LexA repressor (205 aa).

The H-T-H motif DNA-binding region spans 28–48 (RAEIARRLGFKSANAAEEHLK). Catalysis depends on for autocatalytic cleavage activity residues S122 and K159.

The protein belongs to the peptidase S24 family. Homodimer.

The enzyme catalyses Hydrolysis of Ala-|-Gly bond in repressor LexA.. Its function is as follows. Represses a number of genes involved in the response to DNA damage (SOS response), including recA and lexA. In the presence of single-stranded DNA, RecA interacts with LexA causing an autocatalytic cleavage which disrupts the DNA-binding part of LexA, leading to derepression of the SOS regulon and eventually DNA repair. The chain is LexA repressor from Shewanella loihica (strain ATCC BAA-1088 / PV-4).